The sequence spans 372 residues: Chemerin-like receptor 1 (372 aa).

Topologically, residues methionine 1–valine 39 are extracellular. Asparagine 7 carries an N-linked (GlcNAc...) asparagine glycan. A helical membrane pass occupies residues phenylalanine 40–isoleucine 62. Residues alanine 63 to threonine 73 lie on the Cytoplasmic side of the membrane. Residues valine 74–threonine 95 traverse the membrane as a helical segment. Residues tyrosine 96–isoleucine 112 lie on the Extracellular side of the membrane. An intrachain disulfide couples cysteine 110 to cysteine 188. A helical transmembrane segment spans residues serine 113 to phenylalanine 133. The Cytoplasmic segment spans residues aspartate 134–arginine 152. Residues leucine 153–valine 174 form a helical membrane-spanning segment. Over phenylalanine 175–arginine 223 the chain is Extracellular. N-linked (GlcNAc...) asparagine glycosylation occurs at asparagine 191. Residues phenylalanine 224–phenylalanine 244 form a helical membrane-spanning segment. At lysine 245–isoleucine 260 the chain is on the cytoplasmic side. Residues isoleucine 261 to leucine 281 traverse the membrane as a helical segment. At glutamate 282–leucine 299 the chain is on the extracellular side. The helical transmembrane segment at alanine 300–glycine 319 threads the bilayer. Over histidine 320–leucine 372 the chain is Cytoplasmic. Serine 338 is modified (phosphoserine). At threonine 341 the chain carries Phosphothreonine. Residues serine 348, serine 351, and serine 357 each carry the phosphoserine modification. Threonine 371 is modified (phosphothreonine).

It belongs to the chemokine-like receptor (CMKLR) family. In terms of tissue distribution, high expression in heart and lung, low in small intestines, colon, kidney, liver, uterus and brain.

It localises to the cell membrane. Receptor for the chemoattractant adipokine chemerin/RARRES2 and for the omega-3 fatty acid derived molecule resolvin E1. Interaction with RARRES2 initiates activation of G proteins G(i)/G(o) and beta-arrestin pathways inducing cellular responses via second messenger pathways such as intracellular calcium mobilization, phosphorylation of MAP kinases MAPK1/MAPK3 (ERK1/2), TYRO3, MAPK14/P38MAPK and PI3K leading to multifunctional effects, like, reduction of immune responses, enhancing of adipogenesis and angionesis. Resolvin E1 down-regulates cytokine production in macrophages by reducing the activation of MAPK1/3 (ERK1/2) and NF-kappa-B. Positively regulates adipogenesis and adipocyte metabolism. The polypeptide is Chemerin-like receptor 1 (Cmklr1) (Rattus norvegicus (Rat)).